Here is a 213-residue protein sequence, read N- to C-terminus: Nicotinamidase (213 aa).

The Proton acceptor role is filled by Asp-10. Zn(2+) contacts are provided by Asp-52, His-54, and His-86. Lys-111 is a catalytic residue. The active-site Nucleophile is the Cys-156.

Belongs to the isochorismatase family.

The catalysed reaction is nicotinamide + H2O = nicotinate + NH4(+). It catalyses the reaction pyrazinamide + H2O = pyrazine-2-carboxylate + NH4(+). It participates in cofactor biosynthesis; nicotinate biosynthesis; nicotinate from nicotinamide: step 1/1. Its function is as follows. Catalyzes the deamidation of nicotinamide (NAM) into nicotinate. Likely functions in the cyclical salvage pathway for production of NAD from nicotinamide. In terms of biological role, is also able to hydrolyze the first-line antituberculous drug pyrazinamide (PZA) into pyrazinoic acid in vitro, but this reaction is not considered to be physiologically relevant. The protein is Nicotinamidase of Escherichia coli (strain K12).